We begin with the raw amino-acid sequence, 939 residues long: Protein translocase subunit SecA 1 (939 aa).

Residues Gln85, 103–107 (GEGKT), and Asp504 contribute to the ATP site. A disordered region spans residues 848–939 (EVPVEDEKPS…QSKGGRRRKK (92 aa)). Basic and acidic residues-rich tracts occupy residues 852-863 (EDEKPSLEKEDA), 872-889 (PEIR…DRLH), and 914-925 (PVRSEADGLTRA). Residues 926–939 (ERRKQSKGGRRRKK) are compositionally biased toward basic residues.

The protein belongs to the SecA family. In terms of assembly, monomer and homodimer. Part of the essential Sec protein translocation apparatus which comprises SecA, SecYEG and auxiliary proteins SecDF. Other proteins may also be involved.

The protein resides in the cell membrane. It localises to the cytoplasm. It catalyses the reaction ATP + H2O + cellular proteinSide 1 = ADP + phosphate + cellular proteinSide 2.. In terms of biological role, part of the Sec protein translocase complex. Interacts with the SecYEG preprotein conducting channel. Has a central role in coupling the hydrolysis of ATP to the transfer of proteins into and across the cell membrane, serving as an ATP-driven molecular motor driving the stepwise translocation of polypeptide chains across the membrane. This chain is Protein translocase subunit SecA 1, found in Streptomyces avermitilis (strain ATCC 31267 / DSM 46492 / JCM 5070 / NBRC 14893 / NCIMB 12804 / NRRL 8165 / MA-4680).